The primary structure comprises 66 residues: Delta-buthitoxin-Hj1a (66 aa).

Residues 4–66 (RDAYIAQPHN…EPIKVPGKCH (63 aa)) form the LCN-type CS-alpha/beta domain. Cystine bridges form between cysteine 14/cysteine 65, cysteine 18/cysteine 38, cysteine 24/cysteine 48, and cysteine 28/cysteine 50.

It belongs to the long (4 C-C) scorpion toxin superfamily. Sodium channel inhibitor family. Alpha subfamily. In terms of tissue distribution, expressed by the venom gland.

Its subcellular location is the secreted. This recombinant toxin slows fast inactivation on Nav1.1/SCN1A (EC(50)=17 nM), Nav1.4/SN4A (EC(50)=7.5 nM), Nav1.5/SCN5A (EC(50)=9.2 nM) and Nav1.6/SCN8A (EC(50)=37.3 nM) voltage-gated sodium channels. On Nav1.1/SCN1A channel, it acts as an agonist by inducing a shift in both the voltage dependence of channel inactivation (alpha-toxin activity) and activation (beta-toxin activity). In vivo, shows moderate insecticidal activities. It induces irreversible paralysis in blowflies and lethal effects in D.melanogaster. The protein is Delta-buthitoxin-Hj1a of Hottentotta judaicus (Black scorpion).